Reading from the N-terminus, the 360-residue chain is Protein Wnt-2 (360 aa).

The first 25 residues, 1-25 (MNAPVGGIWLWLPLLLTWLSPEVSS), serve as a signal peptide directing secretion. 11 disulfide bridges follow: Cys76/Cys87, Cys127/Cys135, Cys137/Cys157, Cys206/Cys220, Cys208/Cys215, Cys278/Cys309, Cys294/Cys304, Cys308/Cys348, Cys324/Cys339, Cys326/Cys336, and Cys331/Cys332. Ser212 carries the O-palmitoleoyl serine; by PORCN lipid modification. Asn295 carries an N-linked (GlcNAc...) asparagine glycan.

Belongs to the Wnt family. Post-translationally, palmitoleoylation is required for efficient binding to frizzled receptors. Depalmitoleoylation leads to Wnt signaling pathway inhibition.

The protein localises to the secreted. It localises to the extracellular space. Its subcellular location is the extracellular matrix. In terms of biological role, ligand for members of the frizzled family of seven transmembrane receptors. Probable developmental protein. May be a signaling molecule which affects the development of discrete regions of tissues. Is likely to signal over only few cell diameters. This chain is Protein Wnt-2 (WNT2), found in Rhinolophus ferrumequinum (Greater horseshoe bat).